We begin with the raw amino-acid sequence, 312 residues long: Putative 1-aminocyclopropane-1-carboxylate deaminase (312 aa).

Lysine 42 bears the N6-(pyridoxal phosphate)lysine mark.

This sequence belongs to the ACC deaminase/D-cysteine desulfhydrase family. The cofactor is pyridoxal 5'-phosphate.

The enzyme catalyses 1-aminocyclopropane-1-carboxylate + H2O = 2-oxobutanoate + NH4(+). This Thermotoga maritima (strain ATCC 43589 / DSM 3109 / JCM 10099 / NBRC 100826 / MSB8) protein is Putative 1-aminocyclopropane-1-carboxylate deaminase.